A 949-amino-acid polypeptide reads, in one-letter code: Valine--tRNA ligase (949 aa).

Residues 40 to 50 (PNVTGSLHMGH) carry the 'HIGH' region motif. Positions 553–557 (KMSKS) match the 'KMSKS' region motif. Lys556 contributes to the ATP binding site. Positions 877–949 (MAGLIDKEAE…QEQQDKIKAL (73 aa)) form a coiled coil.

It belongs to the class-I aminoacyl-tRNA synthetase family. ValS type 1 subfamily. As to quaternary structure, monomer.

The protein localises to the cytoplasm. The enzyme catalyses tRNA(Val) + L-valine + ATP = L-valyl-tRNA(Val) + AMP + diphosphate. Its function is as follows. Catalyzes the attachment of valine to tRNA(Val). As ValRS can inadvertently accommodate and process structurally similar amino acids such as threonine, to avoid such errors, it has a 'posttransfer' editing activity that hydrolyzes mischarged Thr-tRNA(Val) in a tRNA-dependent manner. In Idiomarina loihiensis (strain ATCC BAA-735 / DSM 15497 / L2-TR), this protein is Valine--tRNA ligase.